The primary structure comprises 49 residues: Large ribosomal subunit protein bL33A (49 aa).

It belongs to the bacterial ribosomal protein bL33 family.

This chain is Large ribosomal subunit protein bL33A, found in Latilactobacillus sakei subsp. sakei (strain 23K) (Lactobacillus sakei subsp. sakei).